The sequence spans 238 residues: Uridylate kinase (238 aa).

10 to 13 serves as a coordination point for ATP; it reads KFSG. The tract at residues 18–23 is involved in allosteric activation by GTP; that stretch reads GDSGFG. Glycine 52 lines the UMP pocket. Residues glycine 53 and arginine 57 each coordinate ATP. UMP-binding positions include aspartate 73 and 134-141; that span reads TGNPFFTT. The ATP site is built by threonine 161, tyrosine 167, and aspartate 170.

It belongs to the UMP kinase family. Homohexamer.

It is found in the cytoplasm. The catalysed reaction is UMP + ATP = UDP + ADP. It functions in the pathway pyrimidine metabolism; CTP biosynthesis via de novo pathway; UDP from UMP (UMPK route): step 1/1. Allosterically activated by GTP. Inhibited by UTP. Its function is as follows. Catalyzes the reversible phosphorylation of UMP to UDP. The polypeptide is Uridylate kinase (Campylobacter curvus (strain 525.92)).